Here is a 408-residue protein sequence, read N- to C-terminus: Acetylornithine/succinyldiaminopimelate aminotransferase (408 aa).

Residues 108-109 (GA) and phenylalanine 141 contribute to the pyridoxal 5'-phosphate site. Position 144 (arginine 144) interacts with N(2)-acetyl-L-ornithine. 226–229 (DEIQ) serves as a coordination point for pyridoxal 5'-phosphate. N6-(pyridoxal phosphate)lysine is present on lysine 255. N(2)-acetyl-L-ornithine is bound at residue threonine 283. Residue threonine 284 participates in pyridoxal 5'-phosphate binding.

The protein belongs to the class-III pyridoxal-phosphate-dependent aminotransferase family. ArgD subfamily. As to quaternary structure, homodimer. The cofactor is pyridoxal 5'-phosphate.

It is found in the cytoplasm. It carries out the reaction N(2)-acetyl-L-ornithine + 2-oxoglutarate = N-acetyl-L-glutamate 5-semialdehyde + L-glutamate. The enzyme catalyses N-succinyl-(2S,6S)-2,6-diaminopimelate + 2-oxoglutarate = (S)-2-succinylamino-6-oxoheptanedioate + L-glutamate. Its pathway is amino-acid biosynthesis; L-arginine biosynthesis; N(2)-acetyl-L-ornithine from L-glutamate: step 4/4. It functions in the pathway amino-acid biosynthesis; L-lysine biosynthesis via DAP pathway; LL-2,6-diaminopimelate from (S)-tetrahydrodipicolinate (succinylase route): step 2/3. Involved in both the arginine and lysine biosynthetic pathways. The sequence is that of Acetylornithine/succinyldiaminopimelate aminotransferase from Buchnera aphidicola subsp. Acyrthosiphon pisum (strain APS) (Acyrthosiphon pisum symbiotic bacterium).